The sequence spans 174 residues: FMN-dependent NADPH-azoreductase (174 aa).

FMN-binding positions include 9–11, 15–16, 73–76, and glycine 106; these read TPR, RT, and EYHS.

This sequence belongs to the azoreductase type 2 family. In terms of assembly, homotetramer. FMN serves as cofactor.

Its function is as follows. Catalyzes the reductive cleavage of azo bond in aromatic azo compounds to the corresponding amines. Requires NADPH, but not NADH, as an electron donor for its activity. This is FMN-dependent NADPH-azoreductase (azr) from Bacillus subtilis (strain 168).